We begin with the raw amino-acid sequence, 74 residues long: Tetrahydromethanopterin S-methyltransferase subunit G (74 aa).

The chain crosses the membrane as a helical span at residues valine 47–leucine 67.

It belongs to the MtrG family. As to quaternary structure, the complex is composed of 8 subunits; MtrA, MtrB, MtrC, MtrD, MtrE, MtrF, MtrG and MtrH.

The protein resides in the cell membrane. It carries out the reaction 5-methyl-5,6,7,8-tetrahydromethanopterin + coenzyme M + 2 Na(+)(in) = 5,6,7,8-tetrahydromethanopterin + methyl-coenzyme M + 2 Na(+)(out). Its pathway is one-carbon metabolism; methanogenesis from CO(2); methyl-coenzyme M from 5,10-methylene-5,6,7,8-tetrahydromethanopterin: step 2/2. Its function is as follows. Part of a complex that catalyzes the formation of methyl-coenzyme M and tetrahydromethanopterin from coenzyme M and methyl-tetrahydromethanopterin. This is an energy-conserving, sodium-ion translocating step. The sequence is that of Tetrahydromethanopterin S-methyltransferase subunit G from Methanococcus maripaludis (strain DSM 14266 / JCM 13030 / NBRC 101832 / S2 / LL).